The chain runs to 803 residues: Sensor histidine kinase CheAY (803 aa).

Histidine 47 carries the phosphohistidine modification. Disordered stretches follow at residues 134–185 and 209–255; these read LESA…DEPD and EADK…ENKA. 3 stretches are compositionally biased toward basic and acidic residues: residues 136 to 166, 209 to 226, and 233 to 254; these read SAKE…ENKA, EADK…KPKQ, and ETPK…EENK. The Histidine kinase domain maps to 270-517; sequence RLDHLMNLIG…TQKLKIPLTL (248 aa). Histidine 273 carries the phosphohistidine; by autocatalysis modification. The 135-residue stretch at 519–653 folds into the CheW-like domain; the sequence is IIQALLVGVQ…VGAMMDMAKS (135 aa). Residues 678-796 form the Response regulatory domain; sequence IVLAIDDSST…YLTTVVKRSI (119 aa). Aspartate 729 carries the 4-aspartylphosphate modification.

Autophosphorylated.

The catalysed reaction is ATP + protein L-histidine = ADP + protein N-phospho-L-histidine.. In terms of biological role, member of the two-component regulatory system CheAY/CheY that regulates chemotaxis and colonization of the gastric mucosa. Functions as a sensor protein kinase which is autophosphorylated at a histidine residue and transfers its phosphate group to the conserved aspartic acid residue in the regulatory domain of CheY. In turn, phosphorylated CheY (CheY-P) interacts with the flagellar motor protein FliM to cause clockwise flagellar rotation and bacterial reversals, as opposed to straight swimming when CheY is not phosphorylated. The polypeptide is Sensor histidine kinase CheAY (cheAY) (Helicobacter pylori (strain ATCC 700392 / 26695) (Campylobacter pylori)).